Here is a 308-residue protein sequence, read N- to C-terminus: Porphobilinogen deaminase (308 aa).

Residue cysteine 241 is modified to S-(dipyrrolylmethanemethyl)cysteine.

Belongs to the HMBS family. In terms of assembly, monomer. Dipyrromethane is required as a cofactor.

The enzyme catalyses 4 porphobilinogen + H2O = hydroxymethylbilane + 4 NH4(+). Its pathway is porphyrin-containing compound metabolism; protoporphyrin-IX biosynthesis; coproporphyrinogen-III from 5-aminolevulinate: step 2/4. Its function is as follows. Tetrapolymerization of the monopyrrole PBG into the hydroxymethylbilane pre-uroporphyrinogen in several discrete steps. The chain is Porphobilinogen deaminase from Staphylococcus saprophyticus subsp. saprophyticus (strain ATCC 15305 / DSM 20229 / NCIMB 8711 / NCTC 7292 / S-41).